A 90-amino-acid polypeptide reads, in one-letter code: Large ribosomal subunit protein bL31 (90 aa).

The interval 65 to 90 is disordered; sequence YSKQEGSGSKSNKSKSTKSKKGKGKK. The span at 76-90 shows a compositional bias: basic residues; it reads NKSKSTKSKKGKGKK.

This sequence belongs to the bacterial ribosomal protein bL31 family. Type A subfamily. As to quaternary structure, part of the 50S ribosomal subunit.

Binds the 23S rRNA. This is Large ribosomal subunit protein bL31 from Trichodesmium erythraeum (strain IMS101).